The following is a 992-amino-acid chain: UvrABC system protein A (992 aa).

The segment covering 1 to 11 (MPKNSSTTVSS) has biased composition (polar residues). Residues 1 to 30 (MPKNSSTTVSSAVEAHAGGLASGPGGARSG) form a disordered region. An ATP-binding site is contributed by 62-69 (GLSGSGKS). The segment at 302-330 (CPNGHEQTVDEIEPRSFSFNNPFGACPEC) adopts a C4-type; atypical zinc-finger fold. ABC transporter domains lie at 360–639 (WSLG…TRSV) and 659–988 (PEKG…RFLA). 692–699 (GVSGSGKS) contributes to the ATP binding site. The segment at 791 to 817 (CEACAGDGTLKIEMNFLPDVYVPCEVC) adopts a C4-type zinc-finger fold.

It belongs to the ABC transporter superfamily. UvrA family. Forms a heterotetramer with UvrB during the search for lesions.

The protein localises to the cytoplasm. Its function is as follows. The UvrABC repair system catalyzes the recognition and processing of DNA lesions. UvrA is an ATPase and a DNA-binding protein. A damage recognition complex composed of 2 UvrA and 2 UvrB subunits scans DNA for abnormalities. When the presence of a lesion has been verified by UvrB, the UvrA molecules dissociate. This Micrococcus luteus (Micrococcus lysodeikticus) protein is UvrABC system protein A.